The primary structure comprises 130 residues: C-C motif chemokine 28 (130 aa).

The first 16 residues, 1–16 (MQQAGLTLMAVAVCVA), serve as a signal peptide directing secretion. 2 disulfide bridges follow: Cys30–Cys58 and Cys31–Cys73. The N-linked (GlcNAc...) asparagine glycan is linked to Asn78. Positions 92–130 (KNGRENVCSGKKQPSRKDRKGHTTRKHRTRGTHRHEASR) are disordered. Positions 104 to 124 (QPSRKDRKGHTTRKHRTRGTH) are enriched in basic residues.

This sequence belongs to the intercrine beta (chemokine CC) family. As to expression, mainly expressed in testis, epithelial cells of normal colon, kidney, Peyer patches, lymph nodes. Also found in lower levels in brain, spleen and lung.

The protein localises to the secreted. Chemotactic for resting CD4, CD8 T-cells and eosinophils. Binds to CCR10 and induces calcium mobilization in a dose-dependent manner. In Mus musculus (Mouse), this protein is C-C motif chemokine 28 (Ccl28).